The sequence spans 310 residues: Beta-1,3-galactosyltransferase 5 (310 aa).

Topologically, residues 1-7 (MAFPKMR) are cytoplasmic. A helical; Signal-anchor for type II membrane protein membrane pass occupies residues 8-28 (LMYICLLVLGALCLYFSMYSL). Over 29–310 (NPFKEQSFVY…NSRGEDCPPV (282 aa)) the chain is Lumenal. Asn130, Asn174, and Asn231 each carry an N-linked (GlcNAc...) asparagine glycan.

The protein belongs to the glycosyltransferase 31 family. As to expression, expressed in stomach, jejunum, colon, pancreas, small intestine, testis and gastrointestinal and pancreatic cancer cell lines. Hardly detected in lung, liver, adrenal gland and peripheral blood leukocytes.

It localises to the golgi apparatus membrane. The catalysed reaction is a globoside Gb4Cer (d18:1(4E)) + UDP-alpha-D-galactose = a globoside GalGb4Cer (d18:1(4E)) + UDP + H(+). It functions in the pathway protein modification; protein glycosylation. Functionally, catalyzes the transfer of Gal to GlcNAc-based acceptors with a preference for the core3 O-linked glycan GlcNAc(beta1,3)GalNAc structure. Can use glycolipid LC3Cer as an efficient acceptor. This is Beta-1,3-galactosyltransferase 5 from Homo sapiens (Human).